The primary structure comprises 410 residues: Histidine--tRNA ligase (410 aa).

It belongs to the class-II aminoacyl-tRNA synthetase family.

The protein localises to the cytoplasm. The catalysed reaction is tRNA(His) + L-histidine + ATP = L-histidyl-tRNA(His) + AMP + diphosphate + H(+). The polypeptide is Histidine--tRNA ligase (Methanocorpusculum labreanum (strain ATCC 43576 / DSM 4855 / Z)).